The sequence spans 515 residues: uncharacterized protein (515 aa).

Positions 146–171 are disordered; the sequence is SSEVDRNSETEGTREENSNTSDWDEQ. Residues 148-162 show a composition bias toward basic and acidic residues; the sequence is EVDRNSETEGTREEN.

It is found in the cytoplasm. The protein localises to the nucleus. This is an uncharacterized protein from Schizosaccharomyces pombe (strain 972 / ATCC 24843) (Fission yeast).